We begin with the raw amino-acid sequence, 349 residues long: MSDIFFNPIWDVRMTDTSLRDGSHHKRHQFTGEEVRSIVAALDAAGVPVIEVTHGDGLGGSSFNYGFSKTPEQELIKIAAETAKESKIAFLMLPGVGTKEDIKEAQNNGGSICRIATHCTEADVSIQHFGLARELGLETVGFLMMAHTISPEKLAQQARIMADAGCQCVYVVDSAGALVLEGVRDRVQALVAELGSDAQVGFHGHENLGLGVANSVEAVRAGAKQIDGSCRRFGAGAGNAPVEALIGVFDKIGVKTGIDFFDIADAAEEVVAPAMPAECLLDRNALIMGYSGVYSSFLKHAIRQSERYGVPAHQLLHRAGQRKLIGGQEDQLIDIALEIKREQEAAASK.

One can recognise a Pyruvate carboxyltransferase domain in the interval 12–264 (VRMTDTSLRD…KTGIDFFDIA (253 aa)). 20–21 (RD) is a substrate binding site. Aspartate 21 lines the Mn(2+) pocket. Catalysis depends on histidine 24, which acts as the Proton acceptor. Serine 174 and histidine 203 together coordinate substrate. Positions 203 and 205 each coordinate Mn(2+). Tyrosine 294 contributes to the substrate binding site.

The protein belongs to the 4-hydroxy-2-oxovalerate aldolase family.

The catalysed reaction is (S)-4-hydroxy-2-oxopentanoate = acetaldehyde + pyruvate. This chain is 4-hydroxy-2-oxovalerate aldolase 2 (bphI-2), found in Mycolicibacterium smegmatis (strain ATCC 700084 / mc(2)155) (Mycobacterium smegmatis).